We begin with the raw amino-acid sequence, 293 residues long: C-type lectin domain family 4 member G (293 aa).

The Cytoplasmic segment spans residues 1 to 31; sequence MDTTRYSKWGGSSEEVPGGPWGRWVHWSRRP. Ser12 carries the post-translational modification Phosphoserine. The helical; Signal-anchor for type II membrane protein transmembrane segment at 32–52 threads the bilayer; that stretch reads LFLALAVLVTTVLWAVILSIL. Topologically, residues 53-293 are extracellular; it reads LSKASTERAA…GWICEKRHNC (241 aa). Asn73 carries N-linked (GlcNAc...) asparagine glycosylation. A coiled-coil region spans residues 96–136; it reads SGTQAQLQTTRAELGEAQAKLMEQESALRELRERVTQGLAE. Residue Asn159 is glycosylated (N-linked (GlcNAc...) asparagine). The region spanning 172–287 is the C-type lectin domain; sequence FEGSCYFFSV…CDSEKDGWIC (116 aa). Residues Cys264 and Cys278 are joined by a disulfide bond.

(Microbial infection) Interacts with Japanese encephalitis virus envelope protein E. As to quaternary structure, (Microbial infection) Interacts with ebolavirus glycoprotein. In terms of assembly, (Microbial infection) Interacts with SARS-CoV spike glycoprotein. (Microbial infection) Interacts with lassa virus and Lymphocytic choriomeningitis virus glycoprotein. Expressed exclusively in fetal and adult liver and in lymph nodes. Specifically expressed by endothelial cells lining lymph node and liver sinuses (at protein level).

It is found in the cell membrane. Functionally, binds mannose, N-acetylglucosamine (GlcNAc) and fucose, but not galactose, in a Ca(2+)-dependent manner, in vitro. (Microbial infection) Acts as a receptor for Japanese encephalitis virus. Its function is as follows. (Microbial infection) Acts as a receptor for Ebolavirus. In terms of biological role, (Microbial infection) Acts as a receptor for SARS-CoV. Functionally, (Microbial infection) Acts as a receptor for Lassa virus and Lymphocytic choriomeningitis virus glycoprotein. The protein is C-type lectin domain family 4 member G (CLEC4G) of Homo sapiens (Human).